Reading from the N-terminus, the 137-residue chain is Large ribosomal subunit protein uL16 (137 aa).

The protein belongs to the universal ribosomal protein uL16 family. As to quaternary structure, part of the 50S ribosomal subunit.

Functionally, binds 23S rRNA and is also seen to make contacts with the A and possibly P site tRNAs. This Francisella tularensis subsp. holarctica (strain FTNF002-00 / FTA) protein is Large ribosomal subunit protein uL16.